A 461-amino-acid chain; its full sequence is Ribonuclease inhibitor (461 aa).

Position 2 is an N-acetylserine (Ser-2). The segment at 2–11 (SLDIQSLDIQ) is 2 X 5 AA tandem repeats of S-L-D-I-Q. LRR repeat units follow at residues 20-48 (WAEL…CKDI), 49-76 (SSAL…VHCV), 77-105 (LQGL…CGVL), 106-133 (SSTL…LQLL), 134-162 (CEGL…CEPL), 163-190 (ASVL…VRVL), 191-219 (CQGL…CRDL), 220-247 (CGIV…MAEL), 248-276 (CPGL…CGDL), 277-304 (CRVL…ARLL), 305-333 (CETL…CSHF), 334-361 (SSVL…VREL), 362-390 (CQGL…CSSL), 391-418 (AATL…ILQL), and 419-447 (VESV…EDRL). Position 82 is a phosphothreonine (Thr-82). The residue at position 91 (Ser-91) is a Phosphoserine.

In terms of assembly, forms high-affinity heterodimers with RNASE1, ANG and RNASE2. The N-terminus is blocked. In terms of processing, at least 30 of the 32 cysteine residues are in the reduced form.

It localises to the cytoplasm. Its subcellular location is the nucleus. Its function is as follows. Ribonuclease inhibitor which inhibits RNASE1, RNASE2 and angiogenin (ANG). May play a role in redox homeostasis. Required to inhibit the cytotoxic tRNA ribonuclease activity of ANG in the cytoplasm in absence of stress. Relocates to the nucleus in response to stress, relieving inhibition of ANG in the cytoplasm, and inhibiting the angiogenic activity of ANG in the nucleus. This is Ribonuclease inhibitor from Homo sapiens (Human).